Reading from the N-terminus, the 125-residue chain is Protein ApaG (125 aa).

Residues 1-125 (MIEQPRICVQ…FRLAIPALIH (125 aa)) enclose the ApaG domain.

This Yersinia pestis bv. Antiqua (strain Antiqua) protein is Protein ApaG.